The primary structure comprises 1291 residues: DNA-directed RNA polymerase subunit beta' (1291 aa).

Zn(2+) is bound by residues cysteine 60, cysteine 62, cysteine 75, and cysteine 78. Residues aspartate 535, aspartate 537, and aspartate 539 each contribute to the Mg(2+) site. Zn(2+) contacts are provided by cysteine 874, cysteine 951, cysteine 958, and cysteine 961.

It belongs to the RNA polymerase beta' chain family. The RNAP catalytic core consists of 2 alpha, 1 beta, 1 beta' and 1 omega subunit. When a sigma factor is associated with the core the holoenzyme is formed, which can initiate transcription. It depends on Mg(2+) as a cofactor. Requires Zn(2+) as cofactor.

It catalyses the reaction RNA(n) + a ribonucleoside 5'-triphosphate = RNA(n+1) + diphosphate. Its function is as follows. DNA-dependent RNA polymerase catalyzes the transcription of DNA into RNA using the four ribonucleoside triphosphates as substrates. The sequence is that of DNA-directed RNA polymerase subunit beta' from Leifsonia xyli subsp. xyli (strain CTCB07).